The sequence spans 28 residues: Cytochrome c oxidase subunit 5B, mitochondrial (28 aa).

The protein belongs to the cytochrome c oxidase subunit 5B family. In terms of assembly, component of the cytochrome c oxidase (complex IV, CIV), a multisubunit enzyme composed of a catalytic core of 3 subunits and several supernumerary subunits. The complex exists as a monomer or a dimer and forms supercomplexes (SCs) in the inner mitochondrial membrane with ubiquinol-cytochrome c oxidoreductase (cytochrome b-c1 complex, complex III, CIII).

It localises to the mitochondrion inner membrane. It participates in energy metabolism; oxidative phosphorylation. Its function is as follows. Component of the cytochrome c oxidase, the last enzyme in the mitochondrial electron transport chain which drives oxidative phosphorylation. The respiratory chain contains 3 multisubunit complexes succinate dehydrogenase (complex II, CII), ubiquinol-cytochrome c oxidoreductase (cytochrome b-c1 complex, complex III, CIII) and cytochrome c oxidase (complex IV, CIV), that cooperate to transfer electrons derived from NADH and succinate to molecular oxygen, creating an electrochemical gradient over the inner membrane that drives transmembrane transport and the ATP synthase. Cytochrome c oxidase is the component of the respiratory chain that catalyzes the reduction of oxygen to water. Electrons originating from reduced cytochrome c in the intermembrane space (IMS) are transferred via the dinuclear copper A center (CU(A)) of subunit 2 and heme A of subunit 1 to the active site in subunit 1, a binuclear center (BNC) formed by heme A3 and copper B (CU(B)). The BNC reduces molecular oxygen to 2 water molecules using 4 electrons from cytochrome c in the IMS and 4 protons from the mitochondrial matrix. The sequence is that of Cytochrome c oxidase subunit 5B, mitochondrial from Solanum tuberosum (Potato).